The chain runs to 506 residues: Protein NEN3 (506 aa).

One can recognise an Exonuclease domain in the interval 15-176 (FFDLETAVPT…LDDVRMNLEV (162 aa)). Mg(2+) is bound by residues Asp-17 and Glu-19. His-164 serves as the catalytic Proton donor/acceptor. Residue Asp-169 participates in Mg(2+) binding. 2 disordered regions span residues 204 to 240 (KSPR…SSVD) and 289 to 313 (AEEA…KDES). Low complexity predominate over residues 222 to 238 (SSTSSSSSPKTDPSSSS). The span at 290 to 299 (EEAKTVRQQD) shows a compositional bias: basic and acidic residues.

Mg(2+) is required as a cofactor.

In terms of biological role, probable exonuclease that may be involved in enuclation of sieve elements. This is Protein NEN3 (NEN3) from Arabidopsis thaliana (Mouse-ear cress).